Consider the following 268-residue polypeptide: MDRYQALFAQLEKKNQGAFVPFVTIGDPNPELSYDIMETLIEAGADALELGIPFSDPLADGPTIQGANIRALDSKTTPAICFELITKIRSKYPDTPIGLLVYANLVFANGIDNFYTKCQQAGVDSVLIADVPTNESQEFRESAIEHGIHPIFIAPPSASPETLETVAKLGGGYTYLLSRAGVTGAETKAGMPVAQLLERLNQYDAPPAILGFGISEPAQVEEAVKAGAAGAISGSATVKLIEQHQANPEALLKALADFTSSMKAATQK.

Catalysis depends on proton acceptor residues Glu49 and Asp60.

Belongs to the TrpA family. As to quaternary structure, tetramer of two alpha and two beta chains.

It carries out the reaction (1S,2R)-1-C-(indol-3-yl)glycerol 3-phosphate + L-serine = D-glyceraldehyde 3-phosphate + L-tryptophan + H2O. It participates in amino-acid biosynthesis; L-tryptophan biosynthesis; L-tryptophan from chorismate: step 5/5. Functionally, the alpha subunit is responsible for the aldol cleavage of indoleglycerol phosphate to indole and glyceraldehyde 3-phosphate. The polypeptide is Tryptophan synthase alpha chain (Aliivibrio fischeri (strain ATCC 700601 / ES114) (Vibrio fischeri)).